Here is a 477-residue protein sequence, read N- to C-terminus: Pentatricopeptide repeat-containing protein At1g55630 (477 aa).

9 PPR repeats span residues 151 to 185 (TANC…GYPT), 186 to 220 (TACT…NYRP), 221 to 255 (YKHS…GFTP), 256 to 290 (DVLT…GFSP), 291 to 325 (DLYT…GVEP), 326 to 360 (GVIH…GCTP), 361 to 395 (DVVC…GQLP), 396 to 430 (NVFT…GCNP), and 431 to 465 (NFVV…GHYV).

This sequence belongs to the PPR family. P subfamily.

This chain is Pentatricopeptide repeat-containing protein At1g55630, found in Arabidopsis thaliana (Mouse-ear cress).